A 302-amino-acid polypeptide reads, in one-letter code: Sulfate adenylyltransferase subunit 2 (302 aa).

Residues R280–F302 are disordered.

This sequence belongs to the PAPS reductase family. CysD subfamily. Heterodimer composed of CysD, the smaller subunit, and CysN.

The enzyme catalyses sulfate + ATP + H(+) = adenosine 5'-phosphosulfate + diphosphate. It functions in the pathway sulfur metabolism; hydrogen sulfide biosynthesis; sulfite from sulfate: step 1/3. Its function is as follows. With CysN forms the ATP sulfurylase (ATPS) that catalyzes the adenylation of sulfate producing adenosine 5'-phosphosulfate (APS) and diphosphate, the first enzymatic step in sulfur assimilation pathway. APS synthesis involves the formation of a high-energy phosphoric-sulfuric acid anhydride bond driven by GTP hydrolysis by CysN coupled to ATP hydrolysis by CysD. The protein is Sulfate adenylyltransferase subunit 2 of Shewanella baltica (strain OS195).